Here is a 129-residue protein sequence, read N- to C-terminus: Fluoride-specific ion channel FluC 2 (129 aa).

Helical transmembrane passes span 4 to 24 (LDVM…WWIG), 39 to 59 (TFLI…LFGV), 65 to 85 (YGTM…TTFS), and 100 to 120 (GGLA…AAWL). Positions 79 and 82 each coordinate Na(+).

The protein belongs to the fluoride channel Fluc/FEX (TC 1.A.43) family.

The protein localises to the cell inner membrane. The catalysed reaction is fluoride(in) = fluoride(out). With respect to regulation, na(+) is not transported, but it plays an essential structural role and its presence is essential for fluoride channel function. Fluoride-specific ion channel. Important for reducing fluoride concentration in the cell, thus reducing its toxicity. This chain is Fluoride-specific ion channel FluC 2, found in Brucella suis biovar 1 (strain 1330).